The following is a 788-amino-acid chain: Endonuclease MutS2 (788 aa).

332–339 (GPNTGGKT) is an ATP binding site. The 76-residue stretch at 713-788 (VDLRGMDAEE…GTGVTVVEIK (76 aa)) folds into the Smr domain.

The protein belongs to the DNA mismatch repair MutS family. MutS2 subfamily. In terms of assembly, homodimer. Binds to stalled ribosomes, contacting rRNA.

Endonuclease that is involved in the suppression of homologous recombination and thus may have a key role in the control of bacterial genetic diversity. Its function is as follows. Acts as a ribosome collision sensor, splitting the ribosome into its 2 subunits. Detects stalled/collided 70S ribosomes which it binds and splits by an ATP-hydrolysis driven conformational change. Acts upstream of the ribosome quality control system (RQC), a ribosome-associated complex that mediates the extraction of incompletely synthesized nascent chains from stalled ribosomes and their subsequent degradation. Probably generates substrates for RQC. The chain is Endonuclease MutS2 from Clostridium botulinum (strain Loch Maree / Type A3).